The following is a 346-amino-acid chain: Coproporphyrin III ferrochelatase (346 aa).

Residues Ser52 and Tyr121 each coordinate Fe-coproporphyrin III. 2 residues coordinate Fe(2+): His181 and Glu264.

Belongs to the ferrochelatase family.

The protein localises to the cytoplasm. The catalysed reaction is Fe-coproporphyrin III + 2 H(+) = coproporphyrin III + Fe(2+). It functions in the pathway porphyrin-containing compound metabolism; protoheme biosynthesis. Involved in coproporphyrin-dependent heme b biosynthesis. Catalyzes the insertion of ferrous iron into coproporphyrin III to form Fe-coproporphyrin III. This is Coproporphyrin III ferrochelatase from Mycobacterium sp. (strain KMS).